The following is a 141-amino-acid chain: Nucleoside triphosphatase NudI (141 aa).

Residues 1–141 enclose the Nudix hydrolase domain; that stretch reads MRQRTIVCPL…RKTLRLKGLL (141 aa). The Nudix box motif lies at 38–59; it reads GGVEPGERIEEALRREIREELG.

This sequence belongs to the Nudix hydrolase family. NudI subfamily. Monomer. Mg(2+) serves as cofactor.

It catalyses the reaction a ribonucleoside 5'-triphosphate + H2O = a ribonucleoside 5'-phosphate + diphosphate + H(+). The catalysed reaction is a 2'-deoxyribonucleoside 5'-triphosphate + H2O = a 2'-deoxyribonucleoside 5'-phosphate + diphosphate + H(+). The enzyme catalyses dUTP + H2O = dUMP + diphosphate + H(+). It carries out the reaction dTTP + H2O = dTMP + diphosphate + H(+). It catalyses the reaction dCTP + H2O = dCMP + diphosphate + H(+). In terms of biological role, catalyzes the hydrolysis of nucleoside triphosphates, with a preference for pyrimidine deoxynucleoside triphosphates (dUTP, dTTP and dCTP). This Escherichia coli (strain ATCC 8739 / DSM 1576 / NBRC 3972 / NCIMB 8545 / WDCM 00012 / Crooks) protein is Nucleoside triphosphatase NudI.